Reading from the N-terminus, the 112-residue chain is Large ribosomal subunit protein uL22 (112 aa).

It belongs to the universal ribosomal protein uL22 family. Part of the 50S ribosomal subunit.

Its function is as follows. This protein binds specifically to 23S rRNA; its binding is stimulated by other ribosomal proteins, e.g. L4, L17, and L20. It is important during the early stages of 50S assembly. It makes multiple contacts with different domains of the 23S rRNA in the assembled 50S subunit and ribosome. In terms of biological role, the globular domain of the protein is located near the polypeptide exit tunnel on the outside of the subunit, while an extended beta-hairpin is found that lines the wall of the exit tunnel in the center of the 70S ribosome. This is Large ribosomal subunit protein uL22 from Finegoldia magna (strain ATCC 29328 / DSM 20472 / WAL 2508) (Peptostreptococcus magnus).